The sequence spans 221 residues: Probable septum site-determining protein MinC (221 aa).

Belongs to the MinC family. Interacts with MinD and FtsZ.

Its function is as follows. Cell division inhibitor that blocks the formation of polar Z ring septums. Rapidly oscillates between the poles of the cell to destabilize FtsZ filaments that have formed before they mature into polar Z rings. Prevents FtsZ polymerization. The protein is Probable septum site-determining protein MinC of Shewanella oneidensis (strain ATCC 700550 / JCM 31522 / CIP 106686 / LMG 19005 / NCIMB 14063 / MR-1).